The primary structure comprises 967 residues: Isoleucine--tRNA ligase (967 aa).

The 'HIGH' region signature appears at 68–78 (PYANGTLHMGH). An L-isoleucyl-5'-AMP-binding site is contributed by Glu583. Positions 624–628 (KMSKS) match the 'KMSKS' region motif. Lys627 serves as a coordination point for ATP. Residues Cys937, Cys940, Cys957, and Cys960 each coordinate Zn(2+).

This sequence belongs to the class-I aminoacyl-tRNA synthetase family. IleS type 1 subfamily. Monomer. Zn(2+) is required as a cofactor.

It is found in the cytoplasm. The catalysed reaction is tRNA(Ile) + L-isoleucine + ATP = L-isoleucyl-tRNA(Ile) + AMP + diphosphate. Its function is as follows. Catalyzes the attachment of isoleucine to tRNA(Ile). As IleRS can inadvertently accommodate and process structurally similar amino acids such as valine, to avoid such errors it has two additional distinct tRNA(Ile)-dependent editing activities. One activity is designated as 'pretransfer' editing and involves the hydrolysis of activated Val-AMP. The other activity is designated 'posttransfer' editing and involves deacylation of mischarged Val-tRNA(Ile). In Prochlorococcus marinus (strain NATL2A), this protein is Isoleucine--tRNA ligase.